The sequence spans 201 residues: MSSLRQSEIKRKTNETDISVFINLDGSGISEIDTGIPFLDHMLHQISSHGLFDLQIKAIGDTHIDDHHTNEDVGIALGKAFSKALGERKGISRFGHFFAPLDEALVQVTLDCSGRPHLSYDLQLKAPRIGNYDTELVREFFIAFVNNSGITLHINQIRGSNSHHIVEACFKAFSRAMRMATEIDPRRSDSIPSSKGMLEKQ.

It belongs to the imidazoleglycerol-phosphate dehydratase family.

The protein localises to the cytoplasm. The catalysed reaction is D-erythro-1-(imidazol-4-yl)glycerol 3-phosphate = 3-(imidazol-4-yl)-2-oxopropyl phosphate + H2O. It participates in amino-acid biosynthesis; L-histidine biosynthesis; L-histidine from 5-phospho-alpha-D-ribose 1-diphosphate: step 6/9. In Prochlorococcus marinus (strain AS9601), this protein is Imidazoleglycerol-phosphate dehydratase.